The primary structure comprises 2515 residues: Nonribosomal peptide synthetase tpzA (2515 aa).

The tract at residues 246–648 (ELATRQPGAQ…GRMGTQVKLR (403 aa)) is adenylation 1. Residues 794 to 867 (SEVEHLIHAI…DMATVALKTS (74 aa)) form the Carrier 1 domain. An O-(pantetheine 4'-phosphoryl)serine modification is found at Ser-828. The interval 924-1332 (DAYPCSPLQE…IRSVPHITPE (409 aa)) is condensation 1. Positions 1357 to 1758 (RKQSQETPSA…GRMNDQIKLR (402 aa)) are adenylation 2. The Carrier 2 domain occupies 1900-1976 (LATTNEERTL…AILSHLTGRK (77 aa)). Position 1937 is an O-(pantetheine 4'-phosphoryl)serine (Ser-1937). The tract at residues 2013 to 2431 (VEDIYPCGPI…LGILPPEEQK (419 aa)) is condensation 2. The Carrier 3 domain maps to 2436 to 2512 (PSLSAAVVRL…AMARRSLVVS (77 aa)). Residue Ser-2473 is modified to O-(pantetheine 4'-phosphoryl)serine.

The protein belongs to the NRP synthetase family.

Its pathway is secondary metabolite biosynthesis. In terms of biological role, nonribosomal peptide synthetase; part of the gene cluster that mediates the biosynthesis of terreazepine,. The first step of terreazepine biosynthesis is catalyzed by the indoleamine 2,3-dioxygenase tpzB which produces N-formyl-kynurenine through the catabolism of tryptophan. The two-module NRPS tpzA then utilizes anthranilate and kynurenine to assemble terreazepine. The first adenylation domain of tpzA (A1) loads anthranilate onto the T1 domain, while A2 loads kynurenine, generated through spontaneous nonenzymatic deformylation of the tzpB-supplied N-formyl-kynurenine. TpzA produces a 2:1 mixture of S-R enantiomers, which suggests that the A2 domain accepts both D- and L-kynurenine. The peptide bond formation between the tethered amino acids is catalyzed by the first condensation domain (C1) between anthranilate's carbonyl carbon and kynurenine's aliphatic primary amine. The second C domain (C2) catalyzes the final cyclization event between the aromatic amine of kynurenine and the tethered carbonyl carbon, yielding the final terreazepine product. The T3 domain may facilitate the interaction with downstream tailoring enzymes. This chain is Nonribosomal peptide synthetase tpzA, found in Aspergillus terreus (strain NIH 2624 / FGSC A1156).